Reading from the N-terminus, the 118-residue chain is Cobalt transport protein CbiN (118 aa).

2 helical membrane passes run 7–27 and 70–90; these read INAL…VLGL and SALF…YFGL. Residues 99–118 are disordered; the sequence is ERASAASGAAAAPGDAPEGD. Residues 102 to 118 show a composition bias toward low complexity; that stretch reads SAASGAAAAPGDAPEGD.

The protein belongs to the CbiN family. Forms an energy-coupling factor (ECF) transporter complex composed of an ATP-binding protein (A component, CbiO), a transmembrane protein (T component, CbiQ) and 2 possible substrate-capture proteins (S components, CbiM and CbiN) of unknown stoichimetry.

Its subcellular location is the cell membrane. It participates in cofactor biosynthesis; adenosylcobalamin biosynthesis. Functionally, part of the energy-coupling factor (ECF) transporter complex CbiMNOQ involved in cobalt import. This is Cobalt transport protein CbiN from Streptomyces coelicolor (strain ATCC BAA-471 / A3(2) / M145).